The following is a 256-amino-acid chain: Pimeloyl-[acyl-carrier protein] methyl ester esterase (256 aa).

An AB hydrolase-1 domain is found at 15–242; that stretch reads HLVLLHGWGL…AAHAPFISHP (228 aa). Substrate contacts are provided by residues Trp22, 82–83, and 143–147; these read SL and FLALQ. Catalysis depends on Ser82, which acts as the Nucleophile. Residues Asp207 and His235 contribute to the active site. Substrate is bound at residue His235.

The protein belongs to the AB hydrolase superfamily. Carboxylesterase BioH family. In terms of assembly, monomer.

The protein resides in the cytoplasm. It catalyses the reaction 6-carboxyhexanoyl-[ACP] methyl ester + H2O = 6-carboxyhexanoyl-[ACP] + methanol + H(+). It participates in cofactor biosynthesis; biotin biosynthesis. Functionally, the physiological role of BioH is to remove the methyl group introduced by BioC when the pimeloyl moiety is complete. It allows to synthesize pimeloyl-ACP via the fatty acid synthetic pathway through the hydrolysis of the ester bonds of pimeloyl-ACP esters. This chain is Pimeloyl-[acyl-carrier protein] methyl ester esterase, found in Escherichia coli O139:H28 (strain E24377A / ETEC).